Consider the following 140-residue polypeptide: Putative nickel-responsive regulator 3 (140 aa).

Ni(2+) is bound by residues His-81, His-92, His-94, and Cys-100.

This sequence belongs to the transcriptional regulatory CopG/NikR family. Ni(2+) is required as a cofactor.

Transcriptional regulator. The chain is Putative nickel-responsive regulator 3 from Methanosarcina acetivorans (strain ATCC 35395 / DSM 2834 / JCM 12185 / C2A).